Reading from the N-terminus, the 34-residue chain is Omega-ctenitoxin-Pn2a (34 aa).

Cystine bridges form between C2–C16, C9–C26, and C15–C28.

The protein belongs to the neurotoxin 02 (plectoxin) family. 01 (Tx3) subfamily. Expressed by the venom gland.

Its subcellular location is the secreted. Inhibits all known high-voltage activated calcium channels (L-, P/Q- and R-type currents) (Cav), and most effectively the P/Q- (Cav2.1/CACNA1A) and R-type (Cav2.3/CACNA1E) currents. In rat brain, inhibits glutamate release, neuronal death and loss of neurotransmission in the hippocampus resulting from ischemia. In vivo, induces rapid general flaccid paralysis followed by death in 10-30 minutes at dose levels of 5 ug per mouse. This chain is Omega-ctenitoxin-Pn2a, found in Phoneutria nigriventer (Brazilian armed spider).